The following is a 193-amino-acid chain: GTP cyclohydrolase 1 (193 aa).

Cys-83, His-86, and Cys-154 together coordinate Zn(2+).

Belongs to the GTP cyclohydrolase I family. As to quaternary structure, homomer.

The enzyme catalyses GTP + H2O = 7,8-dihydroneopterin 3'-triphosphate + formate + H(+). It functions in the pathway cofactor biosynthesis; 7,8-dihydroneopterin triphosphate biosynthesis; 7,8-dihydroneopterin triphosphate from GTP: step 1/1. The chain is GTP cyclohydrolase 1 from Porphyromonas gingivalis (strain ATCC 33277 / DSM 20709 / CIP 103683 / JCM 12257 / NCTC 11834 / 2561).